We begin with the raw amino-acid sequence, 732 residues long: Polyphosphate kinase (732 aa).

ATP is bound at residue N61. Positions 417 and 447 each coordinate Mg(2+). The Phosphohistidine intermediate role is filled by H477. The ATP site is built by Y510, R606, and H634. Positions 699–718 are disordered; it reads DGTYRQRQPAPGEAERGTHS.

It belongs to the polyphosphate kinase 1 (PPK1) family. Mg(2+) serves as cofactor. An intermediate of this reaction is the autophosphorylated ppk in which a phosphate is covalently linked to a histidine residue through a N-P bond.

The catalysed reaction is [phosphate](n) + ATP = [phosphate](n+1) + ADP. Catalyzes the reversible transfer of the terminal phosphate of ATP to form a long-chain polyphosphate (polyP). This is Polyphosphate kinase from Thermosynechococcus vestitus (strain NIES-2133 / IAM M-273 / BP-1).